A 399-amino-acid polypeptide reads, in one-letter code: Glucose-1-phosphate adenylyltransferase (399 aa).

Alpha-D-glucose 1-phosphate is bound by residues Tyr-100, Gly-165, 180–181 (EK), and Ser-191.

It belongs to the bacterial/plant glucose-1-phosphate adenylyltransferase family. Homotetramer.

It carries out the reaction alpha-D-glucose 1-phosphate + ATP + H(+) = ADP-alpha-D-glucose + diphosphate. The protein operates within glycan biosynthesis; glycogen biosynthesis. In terms of biological role, involved in the biosynthesis of ADP-glucose, a building block required for the elongation reactions to produce glycogen. Catalyzes the reaction between ATP and alpha-D-glucose 1-phosphate (G1P) to produce pyrophosphate and ADP-Glc. This chain is Glucose-1-phosphate adenylyltransferase, found in Desulforamulus reducens (strain ATCC BAA-1160 / DSM 100696 / MI-1) (Desulfotomaculum reducens).